Here is a 217-residue protein sequence, read N- to C-terminus: UPF0502 protein ASA_1460 (217 aa).

The protein belongs to the UPF0502 family.

The protein is UPF0502 protein ASA_1460 of Aeromonas salmonicida (strain A449).